We begin with the raw amino-acid sequence, 37 residues long: Large ribosomal subunit protein bL36c (37 aa).

It belongs to the bacterial ribosomal protein bL36 family.

It localises to the plastid. This is Large ribosomal subunit protein bL36c (rpl36) from Epifagus virginiana (Beechdrops).